The primary structure comprises 601 residues: Oligoendopeptidase F homolog (601 aa).

H387 serves as a coordination point for Zn(2+). E388 is a catalytic residue. Zn(2+)-binding residues include H391 and H394.

This sequence belongs to the peptidase M3 family. Zn(2+) serves as cofactor.

Its function is as follows. Hydrolyzes peptides containing between 7 and 17 amino acids with a rather wide specificity. This chain is Oligoendopeptidase F homolog (pepF), found in Lactococcus lactis subsp. lactis (strain IL1403) (Streptococcus lactis).